Here is a 66-residue protein sequence, read N- to C-terminus: UPF0434 protein M446_0487 (66 aa).

It belongs to the UPF0434 family.

This is UPF0434 protein M446_0487 from Methylobacterium sp. (strain 4-46).